Here is a 628-residue protein sequence, read N- to C-terminus: DNA-directed RNA polymerase subunit beta' (628 aa).

4 residues coordinate Zn(2+): Cys70, Cys72, Cys85, and Cys88. 3 residues coordinate Mg(2+): Asp472, Asp474, and Asp476.

It belongs to the RNA polymerase beta' chain family. RpoC1 subfamily. In plastids the minimal PEP RNA polymerase catalytic core is composed of four subunits: alpha, beta, beta', and beta''. When a (nuclear-encoded) sigma factor is associated with the core the holoenzyme is formed, which can initiate transcription. Mg(2+) serves as cofactor. It depends on Zn(2+) as a cofactor.

It localises to the plastid. The protein resides in the chloroplast. The catalysed reaction is RNA(n) + a ribonucleoside 5'-triphosphate = RNA(n+1) + diphosphate. In terms of biological role, DNA-dependent RNA polymerase catalyzes the transcription of DNA into RNA using the four ribonucleoside triphosphates as substrates. This Gracilaria tenuistipitata var. liui (Red alga) protein is DNA-directed RNA polymerase subunit beta'.